The following is a 328-amino-acid chain: HTH-type transcriptional regulator MalR (328 aa).

The region spanning 2–57 is the HTH lacI-type domain; the sequence is PVTIKDVAKAAGVSPSTVTRVIQNKSTISDETKKRVRKAMKELNYHPNLNARSLVS. The segment at residues 5 to 24 is a DNA-binding region (H-T-H motif); it reads IKDVAKAAGVSPSTVTRVIQ. An inducer binding region spans residues 173-218; it reads TEYFIKKGCKRIAFIGGSKKLFVTKDRLTGYEQALKHYKLTTDNNR. Positions 282-291 are dimerization; sequence NLAAYVDINS.

Transcriptional repressor of the maltosaccharide utilization operons malxCD and malMP. This is HTH-type transcriptional regulator MalR (malR) from Streptococcus pneumoniae serotype 4 (strain ATCC BAA-334 / TIGR4).